A 291-amino-acid chain; its full sequence is NADH-cytochrome b5 reductase 2 (291 aa).

A helical membrane pass occupies residues 7–23; that stretch reads PIAATSVVAAAASSYYF. The 105-residue stretch at 41-145 folds into the FAD-binding FR-type domain; that stretch reads DQWVDLKLKS…KGPIIKYQWQ (105 aa). 148-183 contributes to the FAD binding site; sequence LHKEITLIGAGTGITPLYQLISAINKNPEDKTKVNL.

This sequence belongs to the flavoprotein pyridine nucleotide cytochrome reductase family. It depends on FAD as a cofactor.

The protein resides in the mitochondrion outer membrane. It carries out the reaction 2 Fe(III)-[cytochrome b5] + NADH = 2 Fe(II)-[cytochrome b5] + NAD(+) + H(+). Its function is as follows. May mediate the reduction of outer membrane cytochrome b5. This Yarrowia lipolytica (strain CLIB 122 / E 150) (Yeast) protein is NADH-cytochrome b5 reductase 2 (MCR1).